A 237-amino-acid polypeptide reads, in one-letter code: Class B acid phosphatase (237 aa).

An N-terminal signal peptide occupies residues 1-23; that stretch reads MRKVTLTLSAIALALSLNGAAMA. Residue D69 is the Nucleophile of the active site. Mg(2+)-binding residues include D69 and D71. Catalysis depends on D71, which acts as the Proton donor. Substrate contacts are provided by residues 137–138 and K177; that span reads TG. D192 contacts Mg(2+).

The protein belongs to the class B bacterial acid phosphatase family. In terms of assembly, homotetramer. The cofactor is Mg(2+).

The protein resides in the periplasm. It carries out the reaction a phosphate monoester + H2O = an alcohol + phosphate. In terms of biological role, dephosphorylates several organic phosphate monoesters. Also has a phosphotransferase activity catalyzing the transfer of low-energy phosphate groups from organic phosphate monoesters to free hydroxyl groups of various organic compounds. The protein is Class B acid phosphatase of Proteus mirabilis (strain HI4320).